We begin with the raw amino-acid sequence, 302 residues long: N-acetyl-D-glucosamine kinase (302 aa).

ATP is bound by residues 4 to 11 (GFDVGGTK) and 133 to 140 (GFGGGLVY). Positions 157, 177, 179, and 184 each coordinate Zn(2+).

It belongs to the ROK (NagC/XylR) family. NagK subfamily.

It catalyses the reaction N-acetyl-D-glucosamine + ATP = N-acetyl-D-glucosamine 6-phosphate + ADP + H(+). The protein operates within cell wall biogenesis; peptidoglycan recycling. In terms of biological role, catalyzes the phosphorylation of N-acetyl-D-glucosamine (GlcNAc) derived from cell-wall degradation, yielding GlcNAc-6-P. This Vibrio cholerae serotype O1 (strain ATCC 39315 / El Tor Inaba N16961) protein is N-acetyl-D-glucosamine kinase.